The sequence spans 574 residues: Cytochrome P450 4g15 (574 aa).

A disordered region spans residues 288–327 (REREQNGGVDQTPSTAGSDEKDREKDKEKASPVAGLSYGQ). A compositionally biased stretch (polar residues) spans 295–304 (GVDQTPSTAG). Residues 305–317 (SDEKDREKDKEKA) show a composition bias toward basic and acidic residues. 2 residues coordinate heme: glutamate 379 and cysteine 519.

This sequence belongs to the cytochrome P450 family. Heme is required as a cofactor. In terms of tissue distribution, expressed in larval brain cortex cells and ring glands and weakly in larval digestive system and adult nervous system.

The protein localises to the endoplasmic reticulum membrane. The protein resides in the microsome membrane. Its function is as follows. Probably involved in steroid hormones biosynthesis. This Drosophila melanogaster (Fruit fly) protein is Cytochrome P450 4g15 (Cyp4g15).